We begin with the raw amino-acid sequence, 4493 residues long: Mucin-17 (4493 aa).

A signal peptide spans 1–25 (MPRPGTMALCLLTLVLSLLPPQAAA). The Extracellular segment spans residues 26-4393 (EQDLSVNRAV…QGTQKSLVYG (4368 aa)). Over residues 88-105 (NPEMTSIESSVTSDTPGV) the composition is skewed to polar residues. 4 disordered regions span residues 88–159 (NPEM…SISS), 188–223 (LTTS…SMPA), 248–277 (TISA…STPL), and 306–344 (VITS…ASTM). The span at 106-146 (SSTRMTPTESRTTSESTSDSTTLFPSSTEDTSSPTTPEGTD) shows a compositional bias: low complexity. Polar residues predominate over residues 148–159 (PMSTPSEESISS). Repeat copies occupy residues 185–245 (STPL…EIST), 246–300 (PVTI…TTPA), 301–361 (ATNI…PVDT), 362–418 (STLV…TIPV), 420–477 (SKTF…TTPV), 479–538 (SKTQ…PVDT), 539–597 (STPV…PADS), 598–654 (NTFV…TTPV), 656–715 (SNTP…PVDT), 716–774 (STPV…PLDT), 775–831 (STHI…TTPV), 833–892 (SNSP…PVDT), 893–951 (STPV…PVDT), 952–1010 (STPV…PVDS), 1011–1069 (NTPL…PADT), 1070–1121 (STPV…ASTL), 1122–1187 (STTP…PVDS), 1188–1246 (KTQV…PVDT), 1247–1305 (STPV…PVDT), 1306–1364 (KGPV…PVDN), 1365–1423 (STPV…PVDT), 1424–1482 (STPG…PVDS), 1483–1541 (NSPV…PAVT), 1542–1600 (STPV…PIDS), 1601–1656 (KTQV…TTPV), 1658–1717 (SNSP…PVDN), 1718–1776 (STPV…PIDT), 1777–1835 (STPV…PVDS), 1836–1895 (NSPV…AVTS), 1896–1951 (TPVT…TTLA), 1953–2012 (TRTP…PVDT), 2013–2071 (STPA…PVDS), 2072–2127 (KTQV…TTPV), 2129–2188 (SNSP…PVDT), 2189–2247 (STPV…PVDT), 2248–2306 (STPV…PVDS), 2307–2365 (NTPF…PADT), 2366–2424 (STPV…PVDT), 2425–2483 (STPV…PVDT), 2484–2540 (STPM…TTPV), 2542–2601 (SNSP…PVDT), 2602–2653 (SIPV…ASTL), 2654–2719 (STTP…PVDT), 2720–2770 (STPV…EAST), 2772–2837 (STTA…PVDT), 2838–2896 (STPV…PVDT), 2897–2955 (SIPV…PVDT), 2956–3014 (RTPV…PADT), 3015–3073 (STPV…PVDS), 3074–3132 (NSPV…PVDT), 3133–3191 (STPV…PVDT), 3192–3247 (STPV…TTPV), 3249–3308 (SNTP…PADT), 3309–3367 (STPV…PVDT), 3368–3426 (STPV…PVDS), 3427–3485 (NTLV…PVDT), and 3486–3544 (STPV…PVDS). Positions 185–3727 (STPLTTSTQA…SVVTSTPVTT (3543 aa)) are 59 X approximate tandem repeats. The span at 188-210 (LTTSTQASSSPTTPESTTIPKST) shows a compositional bias: low complexity. Positions 211-223 (NSEGSTPLTSMPA) are enriched in polar residues. A compositionally biased stretch (low complexity) spans 308 to 323 (TSTEASSSPTTAEGTS). The segment covering 324 to 344 (IPTSTYTEGSTPLTSTPASTM) has biased composition (polar residues). The span at 425-441 (TTASEASSSPTTAEDTS) shows a compositional bias: low complexity. Disordered stretches follow at residues 425–629 (TTAS…ERGT), 644–868 (SEAS…TPLT), 886–1104 (STTP…TPLT), 1116–1163 (SEAS…TPLA), 1175–1279 (SEAN…GSTL), and 1296–1338 (STLL…GRTP). Residues 442 to 483 (IATSTPSEGSTPLTSMPVSTTPVASSEASNLSTTPVDSKTQV) are compositionally biased toward polar residues. Asn-471 carries N-linked (GlcNAc...) asparagine glycosylation. Low complexity predominate over residues 484–497 (TTSTEASSSPPTAE). The span at 498–528 (VNSMPTSTPSEGSTPLTSMSVSTMPVASSEA) shows a compositional bias: polar residues. 2 stretches are compositionally biased toward low complexity: residues 529 to 573 (STLS…TPLT) and 584 to 618 (SSEA…EGTS). Polar residues-rich tracts occupy residues 619-629 (MPTSTYSERGT) and 644-660 (SEAS…NTPV). The span at 661-677 (TTSTEATSSSTTAEGTS) shows a compositional bias: low complexity. Residues 678 to 705 (MPTSTYTEGSTPLTSMPVNTTLVASSEA) show a composition bias toward polar residues. Asn-696 is a glycosylation site (N-linked (GlcNAc...) asparagine). Over residues 706–733 (STLSTTPVDTSTPVTTSTEASSSPTTAD) the composition is skewed to low complexity. Residues 737-754 (MPTSTPSEGSTPLTSMPV) show a composition bias toward polar residues. Over residues 755–776 (SKTLLTSSEASTLSTTPLDTST) the composition is skewed to low complexity. Residues 777-832 (HITTSTEASCSPTTTEGTSMPISTPSEGSPLLTSIPVSITPVTSPEASTLSTTPVD) are compositionally biased toward polar residues. The segment covering 833–849 (SNSPVTTSTEVSSSPTP) has biased composition (low complexity). Over residues 854–868 (SMPTSTYSEGRTPLT) the composition is skewed to polar residues. Residues 886–900 (STTPVDTSTPVTNST) show a composition bias toward low complexity. The N-linked (GlcNAc...) asparagine glycan is linked to Asn-898. Polar residues predominate over residues 901-944 (EARSSPTTSEGTSMPTSTPGEGSTPLTSMPDSTTPVVSSEARTL). Over residues 945 to 972 (SATPVDTSTPVTTSTEATSSPTTAEGTS) the composition is skewed to low complexity. A compositionally biased stretch (polar residues) spans 973–1011 (IPTSTPSEGTTPLTSTPVSHTLVANSEASTLSTTPVDSN). A compositionally biased stretch (low complexity) spans 1012–1021 (TPLTTSTEAS). Over residues 1029–1062 (GTSMPTSTPSEGSTPLTRMPVSTTMVASSETSTL) the composition is skewed to polar residues. Residues 1063–1090 (STTPADTSTPVTTYSQASSSSTTADGTS) are compositionally biased toward low complexity. Polar residues-rich tracts occupy residues 1091-1104 (MPTS…TPLT) and 1116-1132 (SEAS…SIPV). The segment covering 1133–1149 (TTSTEASSSPTTAEGTS) has biased composition (low complexity). 2 stretches are compositionally biased toward polar residues: residues 1175–1198 (SEAN…TEAS) and 1205–1222 (EVTS…TPLT). Residues 1237-1279 (STLSTSPVDTSTPVTTSAETSSSPTTAEGTSLPTSTTSEGSTL) show a composition bias toward low complexity. 2 stretches are compositionally biased toward polar residues: residues 1310–1320 (VTSNEVSSSPT) and 1326–1338 (SMPT…GRTP). N-linked (GlcNAc...) asparagine glycosylation is present at Asn-1345. Over residues 1360–1394 (TPVDNSTPVTTSTEACSSPTTSEGTSMPNSNPSEG) the composition is skewed to polar residues. Disordered stretches follow at residues 1360-1516 (TPVD…STAL), 1537-1575 (TPAV…STPL), 1590-1930 (ANTL…PLTS), 1947-2163 (STTL…RTPL), 2177-2281 (AIST…TTPL), 2295-2501 (EVST…TTAE), 2524-2630 (TTPV…TPSE), 2647-2693 (SSEA…RSTP), 2709-2751 (ASTL…DGST), 2765-2853 (SSEA…SPTT), 2879-2925 (TPVA…TPSE), 2942-3167 (GSEA…TPLT), 3182-3577 (STLS…GSSS), 3589-3635 (TSSE…EVST), 3667-3701 (ITST…TMPV), 3785-3812 (MTTA…TSER), 3829-3849 (PSEA…LLTS), 3892-3914 (ASIA…DTAS), 3965-3988 (VITS…FSTT), and 4008-4129 (STAP…TPTV). Composition is skewed to low complexity over residues 1395-1415 (TTPL…EAST) and 1423-1442 (TSTP…TAEG). Positions 1461-1483 (PVSNTPVANSEASTLSTTPVDSN) are enriched in polar residues. A compositionally biased stretch (low complexity) spans 1484–1499 (SPVVTSTAVSSSPTPA). Over residues 1504–1516 (IAISTPSEGSTAL) the composition is skewed to polar residues. Low complexity predominate over residues 1537 to 1547 (TPAVTSTPVTT). Composition is skewed to polar residues over residues 1548-1575 (YSQA…STPL) and 1590-1604 (ANTL…KTQV). The segment covering 1605 to 1620 (TASTEASSSTTAEGSS) has biased composition (low complexity). Polar residues-rich tracts occupy residues 1621–1673 (MTIS…SSPT) and 1679–1775 (SMPT…TPID). Residues 1776–1797 (TSTPVTTSTEATSSPTTAEGTS) are compositionally biased toward low complexity. The segment covering 1798–1836 (IPTSTLSEGMTPLTSTPVSHTLVANSEASTLSTTPVDSN) has biased composition (polar residues). Low complexity predominate over residues 1837-1852 (SPVVTSTAVSSSPTPA). Residues 1856–1883 (SIATSTPSEGSTALTSIPVSTTTVASSE) show a composition bias toward polar residues. Over residues 1884–1900 (TNTLSTTPAVTSTPVTT) the composition is skewed to low complexity. Polar residues-rich tracts occupy residues 1901–1921 (YAQV…TSTP) and 1947–1976 (STTL…TSMP). Residues 1984–2033 (STPLTSMPLSTTLVVSSEASTLSTTPVDTSTPATTSTEGSSSPTTAGGTS) are compositionally biased toward low complexity. Polar residues-rich tracts occupy residues 2034 to 2043 (IQTSTPSERT) and 2051 to 2077 (VSTT…QVTN). Asn-2077 carries N-linked (GlcNAc...) asparagine glycosylation. Over residues 2078–2091 (STEASSSATAEGSS) the composition is skewed to low complexity. Residues 2092 to 2156 (MTISAPSEGS…EGTSMQTSTY (65 aa)) show a composition bias toward polar residues. Low complexity predominate over residues 2177–2196 (AISTLSTTPVDTSTPVTNST). An N-linked (GlcNAc...) asparagine glycan is attached at Asn-2194. Residues 2197–2240 (EARSSPTTSEGTSMPTSTPSEGSTPFTSMPVSTMPVVTSEASTL) are compositionally biased toward polar residues. Positions 2241 to 2268 (SATPVDTSTPVTTSTEATSSPTTAEGTS) are enriched in low complexity. 2 stretches are compositionally biased toward polar residues: residues 2269–2281 (IPTS…TTPL) and 2295–2307 (EVST…VDSN). Residues 2308–2317 (TPFTTSTEAS) show a composition bias toward low complexity. Polar residues predominate over residues 2325–2358 (GTSMPTSTSSEGNTPLTRMPVSTTMVASFETSTL). The span at 2359–2371 (STTPADTSTPVTT) shows a compositional bias: low complexity. A compositionally biased stretch (polar residues) spans 2372–2395 (YSQAGSSPTTADDTSMPTSTYSEG). Low complexity-rich tracts occupy residues 2396–2445 (STPL…EGTS) and 2462–2499 (PVST…SPTT). Polar residues predominate over residues 2524–2547 (TTPVASPEASTLSTTPVDSNSPVV). The segment covering 2548–2563 (TSTEISSSATSAEGTS) has biased composition (low complexity). Polar residues predominate over residues 2564-2576 (MPTSTYSEGSTPL). Residues 2586–2617 (LASSEASTLSTTPVDTSIPVTTSTETSSSPTT) show a composition bias toward low complexity. Positions 2618 to 2628 (AKDTSMPISTP) are enriched in polar residues. Positions 2654–2681 (STTPVDTRTLVTTSTGTSSSPTTAEGSS) are enriched in low complexity. A compositionally biased stretch (polar residues) spans 2682–2693 (MPTSTPGERSTP). Residues 2710–2740 (STLSTTPVDTSTPVTTSAEASSSPTTAEGTS) show a composition bias toward low complexity. Positions 2741–2751 (MRISTPSDGST) are enriched in polar residues. Low complexity-rich tracts occupy residues 2765 to 2816 (SSEA…TSMP) and 2829 to 2853 (TLST…SPTT). Polar residues predominate over residues 2879 to 2900 (TPVASSEASTLSTTPVDTSIPV). Composition is skewed to low complexity over residues 2901 to 2917 (TTST…EGTS) and 2950 to 2976 (TTPV…EGTS). Residues 2988–3009 (PLTSMSVSTMPVASSEASTLSR) show a composition bias toward polar residues. A compositionally biased stretch (low complexity) spans 3010-3031 (TPADTSTPVTTSTEASSSPTTA). Positions 3037-3057 (PISTPSEGSTPLTSIPVSTTP) are enriched in polar residues. Composition is skewed to low complexity over residues 3073–3089 (SNSP…SPTP) and 3104–3140 (STPL…TTST). The span at 3141 to 3166 (EAHSSPTTSEGTSMPTSTPSEGSTPL) shows a compositional bias: polar residues. A compositionally biased stretch (low complexity) spans 3185–3211 (SATPVDTSTPVTTSTEATSSTTAEGTS). Over residues 3212–3253 (IPTSTPSEGMTPLTSVPVSNTPVASSEASILSTTPVDSNTPL) the composition is skewed to polar residues. Low complexity predominate over residues 3254-3267 (TTSTEASSSPPTAE). A compositionally biased stretch (polar residues) spans 3268-3288 (GTSMPTSTPSEGSTPLTSMPV). The segment covering 3289-3314 (STTTVASSETSTLSTTPADTSTPVTT) has biased composition (low complexity). Polar residues predominate over residues 3329–3357 (SMPTSTYSEGSTPLTNMSFSTTPVVSSEA). An N-linked (GlcNAc...) asparagine glycan is attached at Asn-3344. The span at 3358–3375 (STLSTTPVDTSTPVTTST) shows a compositional bias: low complexity. The segment covering 3376 to 3401 (EASLSPTTAEGTSIPTSSPSEGTTPL) has biased composition (polar residues). Residues 3405–3414 (PVSTTPVVSS) are compositionally biased toward low complexity. Polar residues-rich tracts occupy residues 3415 to 3441 (EVNT…SSPT) and 3447 to 3475 (SLPT…SSEA). Positions 3476–3501 (STLSTTPVDTSTPVTTSSPTNSSPTT) are enriched in low complexity. Polar residues-rich tracts occupy residues 3502–3549 (AEVT…TFVT) and 3558–3571 (PATL…MSTP). The span at 3589–3616 (TSSEASTPSTPSVDRSTPVTTSTQSNST) shows a compositional bias: low complexity. 2 repeat units span residues 3604 to 3662 (STPV…PVDT) and 3663 to 3727 (STPV…PVTT). The segment covering 3626-3635 (PMSTPSEVST) has biased composition (polar residues). Over residues 3667–3679 (ITSTQVSSSPVTP) the composition is skewed to low complexity. 2 stretches are compositionally biased toward polar residues: residues 3690–3701 (SEGSTPLTTMPV) and 3785–3806 (MTTA…TMPM). Low complexity-rich tracts occupy residues 3967–3988 (TSTE…FSTT), 4008–4083 (STAP…SSTT), and 4090–4129 (TTMT…TPTV). The N-linked (GlcNAc...) asparagine glycan is linked to Asn-4116. The EGF-like domain occupies 4131-4170 (RTTTCFGDGCQNTASRCKNGGTWDGLKCQCPNLYYGELCE). Cystine bridges form between Cys-4135/Cys-4147, Cys-4140/Cys-4158, and Cys-4160/Cys-4169. The SEA domain maps to 4184 to 4291 (ISAQMELTVT…QQIMINDICS (108 aa)). N-linked (GlcNAc...) asparagine glycans are attached at residues Asn-4205, Asn-4236, Asn-4267, Asn-4297, and Asn-4305. The helical transmembrane segment at 4394–4414 (LVGAGVVLMLIILVALLMLVF) threads the bilayer. The Cytoplasmic portion of the chain corresponds to 4415–4493 (RSKREVKRQK…QRPQVMTTSF (79 aa)).

In terms of assembly, interacts via its C-terminus with PDZK1 and this interaction appears important for proper localization. Post-translationally, probably cleaved within the SEA domain. N-glycosylated. Contains high mannose and complex-type glycans. The forms containing the complex type glycans localize to the cell surface. Not O-glycosylated. In terms of tissue distribution, expressed almost exclusively in the intestine. Expression is especially high in both the duodenum and transverse colon. Expressed in mature absorptive cells of the small intestinal villi. No expression is detected in goblet cells. Highly expressed in pancreatic adenocarcinoma tissue (at protein level). Expression is not detectable in normal pancreas, in pancreatitis or in cell lines derived from other cancers.

The protein resides in the cell membrane. It is found in the secreted. Functionally, probably plays a role in maintaining homeostasis on mucosal surfaces. The polypeptide is Mucin-17 (MUC17) (Homo sapiens (Human)).